The following is a 535-amino-acid chain: NAD(P)H-quinone oxidoreductase chain 4 2 (535 aa).

Helical transmembrane passes span Phe-9 to Ile-29, Trp-51 to Gly-71, Leu-106 to Leu-126, Leu-130 to Asp-150, Leu-152 to Trp-172, Phe-184 to Phe-204, Leu-227 to His-247, Thr-258 to Met-278, Leu-290 to Thr-310, Ile-326 to Gly-346, Ala-347 to Ala-367, Leu-399 to Gly-419, Leu-432 to Met-452, and Val-479 to Val-499.

This sequence belongs to the complex I subunit 4 family.

It is found in the cellular thylakoid membrane. It catalyses the reaction a plastoquinone + NADH + (n+1) H(+)(in) = a plastoquinol + NAD(+) + n H(+)(out). The enzyme catalyses a plastoquinone + NADPH + (n+1) H(+)(in) = a plastoquinol + NADP(+) + n H(+)(out). In terms of biological role, NDH-1 shuttles electrons from NAD(P)H, via FMN and iron-sulfur (Fe-S) centers, to quinones in the respiratory chain. The immediate electron acceptor for the enzyme in this species is believed to be plastoquinone. Couples the redox reaction to proton translocation (for every two electrons transferred, four hydrogen ions are translocated across the cytoplasmic membrane), and thus conserves the redox energy in a proton gradient. This Synechococcus sp. (strain JA-3-3Ab) (Cyanobacteria bacterium Yellowstone A-Prime) protein is NAD(P)H-quinone oxidoreductase chain 4 2.